The chain runs to 334 residues: MTPLDAKRPLQLNHLGQLRHFLSLDGLPRELLTEILDTADSFLEVGARAVKKVPLLRGKTVCNVFFENSTRTRTTFELAAQRLSADVITLNVSTSSTSKGETLFDTLRNLEAMAADMFVVRHADSGAAHFIAEHVCPDVAIINGGDGRHAHPTQGMLDMLTIRRHKGGFENLSVAIVGDILHSRVARSNMLALKALGCPDIRVIGPKTLLPVGVEQYGVKVYTDLNEGLKDVDVVIMLRLQRERMTGGLLPSEGEFYRLFGLTTARLAAAKPDAIVMHPGPINRGVEIESAVADGAHSVILNQVTYGIAIRMAVLSMAMSGQNAQRQFEQENAQ.

Residues Arg71 and Thr72 each coordinate carbamoyl phosphate. Position 99 (Lys99) interacts with L-aspartate. Carbamoyl phosphate is bound by residues Arg121, His151, and Gln154. L-aspartate contacts are provided by Arg184 and Arg239. Carbamoyl phosphate is bound by residues Gly280 and Pro281.

It belongs to the aspartate/ornithine carbamoyltransferase superfamily. ATCase family. As to quaternary structure, heterododecamer (2C3:3R2) of six catalytic PyrB chains organized as two trimers (C3), and six regulatory PyrI chains organized as three dimers (R2).

The enzyme catalyses carbamoyl phosphate + L-aspartate = N-carbamoyl-L-aspartate + phosphate + H(+). It participates in pyrimidine metabolism; UMP biosynthesis via de novo pathway; (S)-dihydroorotate from bicarbonate: step 2/3. Catalyzes the condensation of carbamoyl phosphate and aspartate to form carbamoyl aspartate and inorganic phosphate, the committed step in the de novo pyrimidine nucleotide biosynthesis pathway. In Pseudomonas syringae pv. syringae (strain B728a), this protein is Aspartate carbamoyltransferase catalytic subunit.